The primary structure comprises 382 residues: Proton extrusion protein PxcA (382 aa).

4 helical membrane passes run 156 to 176 (TLIS…VQQI), 257 to 277 (AIKN…VCII), 305 to 325 (IILF…QVLL), and 340 to 360 (FILL…KYWI).

This sequence belongs to the CemA family.

The protein localises to the cell inner membrane. Its function is as follows. Required for H(+) efflux immediately after light irradiation to form a rapid H(+) concentration gradient across the thylakoid membranes. Together with PxcL, contributes to transient H(+) uptake following dark to light transition. This is Proton extrusion protein PxcA from Prochlorococcus marinus (strain MIT 9313).